A 463-amino-acid chain; its full sequence is Glutamyl-tRNA reductase (463 aa).

Substrate is bound by residues 49-52 (TCNR), Ser-109, 114-116 (EQQ), and Gln-120. The active-site Nucleophile is the Cys-50. 196–201 (GAGAMS) serves as a coordination point for NADP(+).

This sequence belongs to the glutamyl-tRNA reductase family. As to quaternary structure, homodimer.

The catalysed reaction is (S)-4-amino-5-oxopentanoate + tRNA(Glu) + NADP(+) = L-glutamyl-tRNA(Glu) + NADPH + H(+). It participates in porphyrin-containing compound metabolism; protoporphyrin-IX biosynthesis; 5-aminolevulinate from L-glutamyl-tRNA(Glu): step 1/2. Catalyzes the NADPH-dependent reduction of glutamyl-tRNA(Glu) to glutamate 1-semialdehyde (GSA). This Corynebacterium glutamicum (strain ATCC 13032 / DSM 20300 / JCM 1318 / BCRC 11384 / CCUG 27702 / LMG 3730 / NBRC 12168 / NCIMB 10025 / NRRL B-2784 / 534) protein is Glutamyl-tRNA reductase.